The sequence spans 346 residues: tRNA N6-adenosine threonylcarbamoyltransferase (346 aa).

Residues His111 and His115 each coordinate Fe cation. Substrate contacts are provided by residues 134–138 (LVSGG), Asp167, Gly180, and Asn279. Asp307 lines the Fe cation pocket.

Belongs to the KAE1 / TsaD family. Fe(2+) is required as a cofactor.

The protein resides in the cytoplasm. It carries out the reaction L-threonylcarbamoyladenylate + adenosine(37) in tRNA = N(6)-L-threonylcarbamoyladenosine(37) in tRNA + AMP + H(+). Functionally, required for the formation of a threonylcarbamoyl group on adenosine at position 37 (t(6)A37) in tRNAs that read codons beginning with adenine. Is involved in the transfer of the threonylcarbamoyl moiety of threonylcarbamoyl-AMP (TC-AMP) to the N6 group of A37, together with TsaE and TsaB. TsaD likely plays a direct catalytic role in this reaction. The chain is tRNA N6-adenosine threonylcarbamoyltransferase from Burkholderia vietnamiensis (strain G4 / LMG 22486) (Burkholderia cepacia (strain R1808)).